Reading from the N-terminus, the 405-residue chain is Metallophosphoesterase 1 (405 aa).

Residues isoleucine 31 to isoleucine 51 form a helical membrane-spanning segment. Residues aspartate 78, aspartate 120, asparagine 158, histidine 261, histidine 315, and histidine 317 each contribute to the a divalent metal cation site. The helical transmembrane segment at isoleucine 369–tryptophan 389 threads the bilayer.

It belongs to the metallophosphoesterase superfamily. MPPE1 family. It depends on Mn(2+) as a cofactor.

The protein resides in the endoplasmic reticulum-Golgi intermediate compartment membrane. In terms of biological role, metallophosphoesterase that catalyzes the removal of a side-chain ethanolamine-phosphate (EtNP) from the second mannose of the GPI-anchor protein intermediate. Participates in the glycan remodeling steps of GPI-anchor maturation to allow an efficient transport of GPI-anchor proteins from the endoplasmic reticulum to the Golgi. The sequence is that of Metallophosphoesterase 1 from Xenopus laevis (African clawed frog).